The following is a 2835-amino-acid chain: Vanchrobactin synthetase VabF (2835 aa).

Residues Glu16–Thr452 form a condensation 1 region. The tract at residues Gln473–Arg880 is adenylation 1. The region spanning Ala988 to Gln1062 is the Carrier 1 domain. Ser1023 carries the post-translational modification O-(pantetheine 4'-phosphoryl)serine. Condensation stretches follow at residues Trp1081–Gln1499 and Asp1539–Leu1961. Residues Gln1992–Arg2394 form an adenylation 2 region. A Carrier 2 domain is found at Asn2503 to Asp2578. An O-(pantetheine 4'-phosphoryl)serine modification is found at Ser2538. The interval Ala2601–Glu2821 is thioesterase.

This sequence belongs to the NRP synthetase family. Pantetheine 4'-phosphate is required as a cofactor.

The catalysed reaction is holo-[peptidyl-carrier protein] + L-arginine + ATP = L-arginyl-[peptidyl-carrier protein] + AMP + diphosphate. It catalyses the reaction holo-[peptidyl-carrier protein] + L-serine + ATP = L-seryl-[peptidyl-carrier protein] + AMP + diphosphate. It participates in siderophore biosynthesis. Involved in the synthesis of the siderophore vanchrobactin. Probably adenylates L-arginine via its first adenylation domain and loads it onto its first peptidyl carrier domain via a thioester linkage to the phosphopanthetheine moiety. In addition, may adenylate L-serine via its second adenylation domain and loads it onto its second peptidyl carrier domain via a thioester linkage to the phosphopanthetheine moiety. The thioesterase domain may release vanchrobactin after condensation of the siderophore components. In Vibrio anguillarum (Listonella anguillarum), this protein is Vanchrobactin synthetase VabF.